The following is a 911-amino-acid chain: Beta-galactosidase 12 (911 aa).

Residues 1 to 25 (MAARVAAAVAAALLAAALLLPGAAA) form the signal peptide. The active-site Proton donor is E192. E262 (nucleophile) is an active-site residue. N-linked (GlcNAc...) asparagine glycosylation is found at N263, N389, N473, and N777. One can recognise an SUEL-type lectin domain in the interval 744–831 (EDTSTRGTLN…ATLAVQLLLA (88 aa)).

The protein belongs to the glycosyl hydrolase 35 family.

The protein resides in the secreted. The protein localises to the extracellular space. Its subcellular location is the apoplast. It carries out the reaction Hydrolysis of terminal non-reducing beta-D-galactose residues in beta-D-galactosides.. The sequence is that of Beta-galactosidase 12 from Oryza sativa subsp. japonica (Rice).